A 217-amino-acid chain; its full sequence is Large ribosomal subunit protein uL1 (217 aa).

It belongs to the universal ribosomal protein uL1 family. As to quaternary structure, part of the 50S ribosomal subunit.

Binds directly to 23S rRNA. Probably involved in E site tRNA release. Functionally, protein L1 is also a translational repressor protein, it controls the translation of its operon by binding to its mRNA. The polypeptide is Large ribosomal subunit protein uL1 (Aeropyrum pernix (strain ATCC 700893 / DSM 11879 / JCM 9820 / NBRC 100138 / K1)).